A 446-amino-acid polypeptide reads, in one-letter code: tRNA-2-methylthio-N(6)-dimethylallyladenosine synthase (446 aa).

Positions 3-120 (KKIYIKTFGC…LPEMLKQRRS (118 aa)) constitute an MTTase N-terminal domain. Residues Cys-12, Cys-49, Cys-83, Cys-157, Cys-161, and Cys-164 each coordinate [4Fe-4S] cluster. The Radical SAM core domain occupies 143–375 (KVEGATAFVS…QAVIDQNTRR (233 aa)). The TRAM domain occupies 378 to 444 (DEMVGTVQRI…AYTLRGEIIV (67 aa)).

Belongs to the methylthiotransferase family. MiaB subfamily. In terms of assembly, monomer. It depends on [4Fe-4S] cluster as a cofactor.

It is found in the cytoplasm. It carries out the reaction N(6)-dimethylallyladenosine(37) in tRNA + (sulfur carrier)-SH + AH2 + 2 S-adenosyl-L-methionine = 2-methylsulfanyl-N(6)-dimethylallyladenosine(37) in tRNA + (sulfur carrier)-H + 5'-deoxyadenosine + L-methionine + A + S-adenosyl-L-homocysteine + 2 H(+). In terms of biological role, catalyzes the methylthiolation of N6-(dimethylallyl)adenosine (i(6)A), leading to the formation of 2-methylthio-N6-(dimethylallyl)adenosine (ms(2)i(6)A) at position 37 in tRNAs that read codons beginning with uridine. The chain is tRNA-2-methylthio-N(6)-dimethylallyladenosine synthase from Janthinobacterium sp. (strain Marseille) (Minibacterium massiliensis).